A 323-amino-acid polypeptide reads, in one-letter code: Muscleblind-like protein 3 (323 aa).

4 consecutive C3H1-type zinc fingers follow at residues 13–41 (WLTLEVCREFQRGTCSRSDAECKFAHPSR), 47–73 (NGRVIACFDSLKGRCTRENCKYLHPPP), 177–205 (TDKLEVCREFQRGNCTRGESDCRYAHPLE), and 213–239 (ENSVIVCMDYIKGRCSRDKCKYFHPPA).

The protein belongs to the muscleblind family. Expressed in fast and slow myotomal muscle, heart, liver, skin, brain and testis.

The protein resides in the nucleus. It localises to the cytoplasm. Functionally, involved in pre-mRNA alternative splicing regulation. Could inhibit terminal muscle differentiation, acting at approximately the time of myogenin induction. This chain is Muscleblind-like protein 3 (mbnl3), found in Takifugu rubripes (Japanese pufferfish).